The following is a 422-amino-acid chain: Probable D-serine dehydratase (422 aa).

At Lys-105 the chain carries N6-(pyridoxal phosphate)lysine.

It belongs to the serine/threonine dehydratase family. DsdA subfamily. It depends on pyridoxal 5'-phosphate as a cofactor.

It carries out the reaction D-serine = pyruvate + NH4(+). This chain is Probable D-serine dehydratase, found in Carboxydothermus hydrogenoformans (strain ATCC BAA-161 / DSM 6008 / Z-2901).